A 444-amino-acid chain; its full sequence is GTPase Der (444 aa).

EngA-type G domains follow at residues 3–167 (PIVA…PEAE) and 180–353 (LRLA…AECQ). GTP-binding positions include 9-16 (GRPNVGKS), 56-60 (DTGGM), 119-122 (NKVD), 186-193 (GRPNAGKS), 233-237 (DTAGV), and 298-301 (NKTD). Residues 354–438 (IRIGTGELNR…PVKVVCRASH (85 aa)) enclose the KH-like domain.

This sequence belongs to the TRAFAC class TrmE-Era-EngA-EngB-Septin-like GTPase superfamily. EngA (Der) GTPase family. In terms of assembly, associates with the 50S ribosomal subunit.

In terms of biological role, GTPase that plays an essential role in the late steps of ribosome biogenesis. In Solidesulfovibrio magneticus (strain ATCC 700980 / DSM 13731 / RS-1) (Desulfovibrio magneticus), this protein is GTPase Der.